A 440-amino-acid chain; its full sequence is Ribosomal protein uS12 methylthiotransferase RimO (440 aa).

The 116-residue stretch at 2 to 117 (VKVGFVSLGC…LPNVIKKLYE (116 aa)) folds into the MTTase N-terminal domain. Residues cysteine 11, cysteine 47, cysteine 80, cysteine 156, cysteine 160, and cysteine 163 each coordinate [4Fe-4S] cluster. The Radical SAM core domain maps to 142-371 (ATPKFYAYIK…LNLQRKISLE (230 aa)). Residues 374-440 (RKRISKKYEV…FEYDLVGEVI (67 aa)) enclose the TRAM domain.

This sequence belongs to the methylthiotransferase family. RimO subfamily. [4Fe-4S] cluster serves as cofactor.

Its subcellular location is the cytoplasm. The catalysed reaction is L-aspartate(89)-[ribosomal protein uS12]-hydrogen + (sulfur carrier)-SH + AH2 + 2 S-adenosyl-L-methionine = 3-methylsulfanyl-L-aspartate(89)-[ribosomal protein uS12]-hydrogen + (sulfur carrier)-H + 5'-deoxyadenosine + L-methionine + A + S-adenosyl-L-homocysteine + 2 H(+). In terms of biological role, catalyzes the methylthiolation of an aspartic acid residue of ribosomal protein uS12. This is Ribosomal protein uS12 methylthiotransferase RimO from Caldicellulosiruptor saccharolyticus (strain ATCC 43494 / DSM 8903 / Tp8T 6331).